Reading from the N-terminus, the 228-residue chain is MGDSVSVLHPKVLLVSAGFTTSLFVGFNLYRRYCRRIRTYLDLTPSILDNQRQLYGKVTRVGDGDNFRFYHTPGGIFLGWGWLRKVPETRSALKDETLMIRLCGVDAPERSHWGKPAQPFSEEALQWLRNYVMGRYVTITPYSIDQYKRVVARAQVWKWTGRKDVSAEMIRTGIGVVYESKVGAEFGDNESWYRSLQNRAKLLRRGVWSLGKKMTTPGQFKKTYYRGE.

The helical transmembrane segment at 13-30 (LLVSAGFTTSLFVGFNLY) threads the bilayer. Positions 52-210 (RQLYGKVTRV…KLLRRGVWSL (159 aa)) constitute a TNase-like domain. Residue R101 is part of the active site. D106 contacts Ca(2+). Catalysis depends on residues E109 and R149.

Belongs to the LCL3 family.

It localises to the mitochondrion. The protein resides in the membrane. This chain is Probable endonuclease LCL3 (LCL3), found in Meyerozyma guilliermondii (strain ATCC 6260 / CBS 566 / DSM 6381 / JCM 1539 / NBRC 10279 / NRRL Y-324) (Yeast).